Consider the following 777-residue polypeptide: 1,4-alpha-glucan branching enzyme GlgB (777 aa).

Residue Asp408 is the Nucleophile of the active site. The Proton donor role is filled by Glu461.

Belongs to the glycosyl hydrolase 13 family. GlgB subfamily. In terms of assembly, monomer.

It catalyses the reaction Transfers a segment of a (1-&gt;4)-alpha-D-glucan chain to a primary hydroxy group in a similar glucan chain.. Its pathway is glycan biosynthesis; glycogen biosynthesis. In terms of biological role, catalyzes the formation of the alpha-1,6-glucosidic linkages in glycogen by scission of a 1,4-alpha-linked oligosaccharide from growing alpha-1,4-glucan chains and the subsequent attachment of the oligosaccharide to the alpha-1,6 position. The polypeptide is 1,4-alpha-glucan branching enzyme GlgB (Actinobacillus pleuropneumoniae serotype 3 (strain JL03)).